Reading from the N-terminus, the 66-residue chain is Large ribosomal subunit protein eL24 (66 aa).

Zn(2+)-binding residues include cysteine 6, cysteine 9, cysteine 32, and cysteine 36. The C4-type zinc finger occupies 6–36 (CSFCGKSIEPASGFLYVRKDGSVLNFCSRKC).

This sequence belongs to the eukaryotic ribosomal protein eL24 family. As to quaternary structure, part of the 50S ribosomal subunit. Forms a cluster with proteins L3 and L14. Requires Zn(2+) as cofactor.

Binds to the 23S rRNA. The sequence is that of Large ribosomal subunit protein eL24 from Picrophilus torridus (strain ATCC 700027 / DSM 9790 / JCM 10055 / NBRC 100828 / KAW 2/3).